Consider the following 188-residue polypeptide: Putative manganese efflux pump MntP (188 aa).

6 consecutive transmembrane segments (helical) span residues 3–23 (LSAT…ASIG), 41–61 (LIFG…GMLA), 62–82 (SQFV…FLGG), 107–129 (LLVT…LAFL), 143–163 (ATFL…PLLG), and 168–188 (ILGG…HFAG).

The protein belongs to the MntP (TC 9.B.29) family.

Its subcellular location is the cell inner membrane. Its function is as follows. Probably functions as a manganese efflux pump. This chain is Putative manganese efflux pump MntP, found in Klebsiella pneumoniae (strain 342).